The primary structure comprises 385 residues: Hemagglutinin-esterase (385 aa).

A signal peptide spans 1-11 (MLIIFLFFNFC). The segment at 1–121 (MLIIFLFFNF…SNDVWIFNKV (121 aa)) is esterase domain 1. Residues 12 to 361 (YGFNEPLNVV…LNCFYDPLPI (350 aa)) are Virion surface-facing. Catalysis depends on serine 34, which acts as the Nucleophile. Cysteines 38 and 59 form a disulfide. N-linked (GlcNAc...) asparagine; by host glycosylation is found at asparagine 83, asparagine 110, asparagine 145, asparagine 171, asparagine 196, and asparagine 251. An intrachain disulfide couples cysteine 107 to cysteine 155. The tract at residues 122 to 239 (RFYRALYSNM…GSYKIFSTGF (118 aa)) is receptor binding. 2 disulfide bridges follow: cysteine 183–cysteine 249 and cysteine 191–cysteine 222. The esterase domain 2 stretch occupies residues 240 to 352 (VLSIPTKALC…NCPTSAYIKL (113 aa)). A disulfide bond links cysteine 280 and cysteine 285. Asparagine 289 carries an N-linked (GlcNAc...) asparagine; by host glycan. Active-site charge relay system residues include aspartate 299 and histidine 302. A disulfide bridge connects residues cysteine 320 and cysteine 344. Residue asparagine 331 is glycosylated (N-linked (GlcNAc...) asparagine; by host). Residues 362–382 (ILQGILLFLALLFIVFLLFLV) form a helical membrane-spanning segment. Over 383-385 (YHG) the chain is Intravirion.

This sequence belongs to the influenza type C/coronaviruses hemagglutinin-esterase family. In terms of assembly, homodimer; disulfide-linked. Forms a complex with the M protein in the pre-Golgi. Associates then with S-M complex to form a ternary complex S-M-HE. Post-translationally, N-glycosylated in the host RER.

It localises to the virion membrane. The protein resides in the host cell membrane. The enzyme catalyses N-acetyl-9-O-acetylneuraminate + H2O = N-acetylneuraminate + acetate + H(+). It carries out the reaction N-acetyl-4-O-acetylneuraminate + H2O = N-acetylneuraminate + acetate + H(+). Functionally, structural protein that makes short spikes at the surface of the virus. Contains receptor binding and receptor-destroying activities. Mediates de-O-acetylation of N-acetyl-4-O-acetylneuraminic acid, which is probably the receptor determinant recognized by the virus on the surface of erythrocytes and susceptible cells. This receptor-destroying activity is important for virus release as it probably helps preventing self-aggregation and ensures the efficient spread of the progeny virus from cell to cell. May serve as a secondary viral attachment protein for initiating infection, the spike protein being the major one. May become a target for both the humoral and the cellular branches of the immune system. The protein is Hemagglutinin-esterase of Human coronavirus HKU1 (isolate N2) (HCoV-HKU1).